A 239-amino-acid chain; its full sequence is MGQKIHPIGFRLGVSKDWTSKWYAEGTDYANYLEKDFEVREFLRKKLAHASVSKIQIERPRNGAQITIFTARPGIVIGKKGEDIEILKKEVGKILGVATSINIEEIRRPELDSYLVADNIAKQLERRVMFRRAMKRAVASTMRLGAVGVKVSISGRLNGAEIARTEWYREGRVPLHTLRADIDYGLAEAYTTYGVIGVKVWIFKGENLEGLEADTSNTNELSDEKRNRRKPRNANRRKE.

Residues 39 to 107 enclose the KH type-2 domain; the sequence is VREFLRKKLA…ATSINIEEIR (69 aa). Residues 215–239 are disordered; that stretch reads TSNTNELSDEKRNRRKPRNANRRKE. Residues 227–239 show a composition bias toward basic residues; it reads NRRKPRNANRRKE.

The protein belongs to the universal ribosomal protein uS3 family. Part of the 30S ribosomal subunit. Forms a tight complex with proteins S10 and S14.

Functionally, binds the lower part of the 30S subunit head. Binds mRNA in the 70S ribosome, positioning it for translation. The protein is Small ribosomal subunit protein uS3 of Dichelobacter nodosus (strain VCS1703A).